We begin with the raw amino-acid sequence, 487 residues long: DNA polymerase delta small subunit (487 aa).

Residue Met1 is modified to N-acetylmethionine. A Phosphoserine modification is found at Ser20.

The protein belongs to the DNA polymerase delta/II small subunit family. DNA polymerase delta is a heterotrimer of POL3, POL32 and HYS2.

The protein localises to the nucleus. It catalyses the reaction DNA(n) + a 2'-deoxyribonucleoside 5'-triphosphate = DNA(n+1) + diphosphate. Functionally, DNA polymerase delta (DNA polymerase III) participates in chromosomal DNA replication. It is required during synthesis of the leading and lagging DNA strands at the replication fork and binds at/or near replication origins and moves along DNA with the replication fork. It has 3'-5' proofreading exonuclease activity that correct errors arising during DNA replication. It is also involved in DNA synthesis during DNA repair. In Saccharomyces cerevisiae (strain ATCC 204508 / S288c) (Baker's yeast), this protein is DNA polymerase delta small subunit (POL31).